The primary structure comprises 249 residues: 2-C-methyl-D-erythritol 4-phosphate cytidylyltransferase (249 aa).

It belongs to the IspD/TarI cytidylyltransferase family. IspD subfamily.

The catalysed reaction is 2-C-methyl-D-erythritol 4-phosphate + CTP + H(+) = 4-CDP-2-C-methyl-D-erythritol + diphosphate. It participates in isoprenoid biosynthesis; isopentenyl diphosphate biosynthesis via DXP pathway; isopentenyl diphosphate from 1-deoxy-D-xylulose 5-phosphate: step 2/6. Its function is as follows. Catalyzes the formation of 4-diphosphocytidyl-2-C-methyl-D-erythritol from CTP and 2-C-methyl-D-erythritol 4-phosphate (MEP). This chain is 2-C-methyl-D-erythritol 4-phosphate cytidylyltransferase, found in Thermobifida fusca (strain YX).